We begin with the raw amino-acid sequence, 1766 residues long: DNA-directed RNA polymerase II subunit RPB1-A (1766 aa).

Residues Cys69, Cys72, Cys79, and His82 each coordinate Zn(2+). Mg(2+)-binding residues include Asp487, Asp489, and Asp491. The tract at residues 813 to 825 (PHEFFFHTMAGRE) is bridging helix. The segment at 1660-1766 (HAMSSAAPPS…EFGDEEEEEQ (107 aa)) is disordered. The segment covering 1706 to 1716 (RGDEPSTHRSD) has biased composition (basic and acidic residues). The span at 1742-1756 (PTAKTPQQAAPPTAA) shows a compositional bias: low complexity.

The protein belongs to the RNA polymerase beta' chain family. In terms of assembly, component of the RNA polymerase II (Pol II) complex consisting of 12 subunits.

The protein resides in the nucleus. It carries out the reaction RNA(n) + a ribonucleoside 5'-triphosphate = RNA(n+1) + diphosphate. In terms of biological role, DNA-dependent RNA polymerase catalyzes the transcription of DNA into RNA using the four ribonucleoside triphosphates as substrates. Largest and catalytic component of RNA polymerase II which synthesizes mRNA precursors and many functional non-coding RNAs. Forms the polymerase active center together with the second largest subunit. Pol II is the central component of the basal RNA polymerase II transcription machinery. It is composed of mobile elements that move relative to each other. RPB1 is part of the core element with the central large cleft, the clamp element that moves to open and close the cleft and the jaws that are thought to grab the incoming DNA template. At the start of transcription, a single-stranded DNA template strand of the promoter is positioned within the central active site cleft of Pol II. A bridging helix emanates from RPB1 and crosses the cleft near the catalytic site and is thought to promote translocation of Pol II by acting as a ratchet that moves the RNA-DNA hybrid through the active site by switching from straight to bent conformations at each step of nucleotide addition. During transcription elongation, Pol II moves on the template as the transcript elongates. The protein is DNA-directed RNA polymerase II subunit RPB1-A (TRP4.8) of Trypanosoma brucei brucei.